A 245-amino-acid polypeptide reads, in one-letter code: Eukaryotic translation initiation factor 6-2 (245 aa).

The protein belongs to the eIF-6 family. In terms of assembly, monomer. Associates with the 60S ribosomal subunit.

It localises to the cytoplasm. The protein localises to the nucleus. Its subcellular location is the nucleolus. Binds to the 60S ribosomal subunit and prevents its association with the 40S ribosomal subunit to form the 80S initiation complex in the cytoplasm. May also be involved in ribosome biogenesis. This chain is Eukaryotic translation initiation factor 6-2, found in Arabidopsis thaliana (Mouse-ear cress).